The primary structure comprises 268 residues: MRGAFYMAITLFLARSRSATAIDQLDVSQTYLNVGAIGGEGTKLTPKRYLRDGLALSAANEERVKANVLSKSAKTLAAEGEDWLRLSLGTGGHSHPPKSKRKVNLSLAKSKGGISKKVTTPKQRVYKRHFVSIDPRLPGYLKVHQTFRKIFGMPHEMSLTEAVLMYGMVNWKHGSSPATKKIIDSLLRLAERSNLADFERALDPMFVRIASLEEMQNEYFHSLQTMYAKVYAFCHAHPADCTNKKAVSPLERMIKAQRANVILPPVTH.

Positions 1 to 21 (MRGAFYMAITLFLARSRSATA) are cleaved as a signal peptide. The RxLR-dEER signature appears at 48–63 (RYLRDGLALSAANEER). Asn-104 carries an N-linked (GlcNAc...) asparagine glycan.

This sequence belongs to the RxLR effector family.

The protein resides in the secreted. It is found in the host nucleus. Effector that acts as a broad suppressor of cell death to interrupt plant immunity. Inhibits cell death induced by cell death-inducing proteins, including the PAMP elicitor INF1 from P.infestans. This Plasmopara viticola (Downy mildew of grapevine) protein is Secreted RxLR effector protein 5.